We begin with the raw amino-acid sequence, 275 residues long: Glutamate 5-kinase (275 aa).

Lys-17 serves as a coordination point for ATP. 3 residues coordinate substrate: Ser-57, Asp-144, and Asn-160. ATP-binding positions include 180–181 (SD) and 222–228 (TGGMLSK).

It belongs to the glutamate 5-kinase family.

The protein localises to the cytoplasm. The catalysed reaction is L-glutamate + ATP = L-glutamyl 5-phosphate + ADP. It functions in the pathway amino-acid biosynthesis; L-proline biosynthesis; L-glutamate 5-semialdehyde from L-glutamate: step 1/2. Catalyzes the transfer of a phosphate group to glutamate to form L-glutamate 5-phosphate. This is Glutamate 5-kinase from Streptococcus pyogenes serotype M12 (strain MGAS2096).